A 125-amino-acid chain; its full sequence is Protein MGF 110-7L (125 aa).

The first 20 residues, 1–20 (MLVIILGVIGLLASSNLVSS), serve as a signal peptide directing secretion. Residues asparagine 69, asparagine 70, and asparagine 105 are each glycosylated (N-linked (GlcNAc...) asparagine; by host).

This sequence belongs to the asfivirus MGF 110 family.

Plays a role in virus cell tropism, and may be required for efficient virus replication in macrophages. This Ornithodoros (relapsing fever ticks) protein is Protein MGF 110-7L.